We begin with the raw amino-acid sequence, 259 residues long: Sesquipedalian-2 (259 aa).

In terms of domain architecture, PH spans Pro-17–Phe-121. The stretch at Met-124–Ser-149 forms a coiled coil. A F&amp;H motif is present at residues Cys-223–Ile-235.

The protein belongs to the sesquipedalian family. As to quaternary structure, forms homodimers and heterodimers with PHETA1. Interacts with OCRL and INPP5B.

It is found in the early endosome. The protein localises to the recycling endosome. Its subcellular location is the golgi apparatus. It localises to the trans-Golgi network. The protein resides in the cytoplasmic vesicle. It is found in the clathrin-coated vesicle. In terms of biological role, plays a role in endocytic trafficking. Required for receptor recycling from endosomes, both to the trans-Golgi network and the plasma membrane. The chain is Sesquipedalian-2 from Homo sapiens (Human).